Reading from the N-terminus, the 556-residue chain is MDIKRSILLVALAVVAYLMVLQWNQDYGQAALPTETAQSQPAAPALPDSPSATTEGNANDVPAVAGQQQASALPTSAPSSQLIRVRTDVLDLAIDPRGGDIVELHLPQYPRRQDRPDVPFQLFERSSERTYEAQSGLIGDGPDKASGRPQYSSEKTEYQLAEGQDALVVDLNYSADGVNYIKRFTLERGNYALKVNYLIDNQSQQPWTGYLFGQLKRDKSGDPSSSTATGTATYLGAALWTKDEPYRKVSMSNMDDKNLRETVQGGWIAWLQHYFVTAWIPQAGDTNQVQTRKDSQGNYIIGFTGPAVTVPAGAQGETGATLYAGPKSQDKLEELSPGLRLTVDYGILWFIAQPIFWLLQNIHALLGNWGWSIIVLTIVIKLAFFPLSAASYRSMARMRAVSPKMQALKEQFGDDRQKMSQAMMELYKKEKINPLGGCLPILVQMPVFLALYWVLLESVEMRQAPWMFWITDLSIKDPYFILPIIMGVTMFIQQQLNPTPPDPMQARVMKLLPIIFTFFFLWFPAGLVLYWVVNNILSIAQQWYITRQIEAGAKPA.

Residues 7–27 form a helical membrane-spanning segment; sequence ILLVALAVVAYLMVLQWNQDY. Disordered stretches follow at residues 35–59 and 126–152; these read ETAQ…GNAN and SSER…PQYS. The segment covering 36 to 54 has biased composition (low complexity); the sequence is TAQSQPAAPALPDSPSATT. 4 helical membrane passes run 365–385, 435–455, 468–488, and 513–533; these read LLGN…LAFF, LGGC…YWVL, FWIT…IMGV, and PIIF…YWVV.

Belongs to the OXA1/ALB3/YidC family. Type 1 subfamily. Interacts with the Sec translocase complex via SecD. Specifically interacts with transmembrane segments of nascent integral membrane proteins during membrane integration.

The protein resides in the cell inner membrane. Its function is as follows. Required for the insertion and/or proper folding and/or complex formation of integral membrane proteins into the membrane. Involved in integration of membrane proteins that insert both dependently and independently of the Sec translocase complex, as well as at least some lipoproteins. Aids folding of multispanning membrane proteins. The sequence is that of Membrane protein insertase YidC from Stutzerimonas stutzeri (strain A1501) (Pseudomonas stutzeri).